The sequence spans 611 residues: Sodium-coupled monocarboxylate transporter 1 (611 aa).

Topologically, residues 1 to 9 are extracellular; it reads MDASRDIGS. Residues 10–30 form a helical membrane-spanning segment; it reads FVVWDYVVFAGMLLISAAIGI. Residues 31–51 lie on the Cytoplasmic side of the membrane; that stretch reads YYAFAGGGQQTSKDFLMGGRS. A helical membrane pass occupies residues 52 to 72; sequence MSAVPVALSLTASFMSAVTVL. Residues 73-86 lie on the Extracellular side of the membrane; the sequence is GTPAEVYRFGAIFS. Residues 87 to 107 traverse the membrane as a helical segment; that stretch reads IFVITYFFVVVISAEVFLPVF. The Cytoplasmic segment spans residues 108-132; it reads YRLGITSTYEYLELRFNRCIRLCGT. A helical transmembrane segment spans residues 133 to 153; the sequence is ILFIVQTILYTGIVIYAPALA. The Extracellular portion of the chain corresponds to 154–161; the sequence is LNQVTGFD. Residues 162-182 form a helical membrane-spanning segment; that stretch reads LWGAVVATGVVCTFYCTLGGL. Residues 183-184 are Cytoplasmic-facing; it reads KA. The helical transmembrane segment at 185–205 threads the bilayer; it reads VVWTDVFQVGIMVAGFASVII. Residues 206 to 239 are Extracellular-facing; it reads QASITQHGINKILSDAFNGGRLNFWNFDPNPLQR. The helical transmembrane segment at 240–260 threads the bilayer; it reads HTFWTIVIGGTFTWTTIYGVN. At 261-279 the chain is on the cytoplasmic side; it reads QSQVQRYISCKSRLHAKLS. Residues 280 to 300 form a helical membrane-spanning segment; it reads LYVNLVGLWVILTCSIFCGLA. The Extracellular portion of the chain corresponds to 301–336; the sequence is LYSRYRECDPWTSKKVSAIDQLMPYLVLDILKNYPG. Residues 337-359 traverse the membrane as a helical segment; it reads VPGLFVACAYSGTLSTVSSSINA. The Cytoplasmic segment spans residues 360 to 389; sequence LAAVTVEDLIKPRFKSLSEKSLSWISQGMS. Residues 390–410 traverse the membrane as a helical segment; that stretch reads VLYGALCIGMAALASLMGALL. Over 411 to 415 the chain is Extracellular; the sequence is QAALS. The chain crosses the membrane as a helical span at residues 416 to 436; sequence IFGMVGGPLLGLFSLGILVPF. The Cytoplasmic portion of the chain corresponds to 437–439; sequence ANS. Residues 440–460 form a helical membrane-spanning segment; sequence IGALTGLLAGFAISLWVGIGA. The Extracellular portion of the chain corresponds to 461–518; the sequence is QLYPPLPERTLPLPLETYGCNITHNGSDWMSTTEMPFSTSAFQIHNAERTPLMDNWYS. Asparagine 485 carries N-linked (GlcNAc...) asparagine glycosylation. Residues 519-539 form a helical membrane-spanning segment; that stretch reads LSYLYFSTIGTLTTLFVGILI. Topologically, residues 540 to 611 are cytoplasmic; sequence SLSTGGRKQN…HSGKINGTRL (72 aa). A PDZ-binding motif is present at residues 609–611; sequence TRL.

This sequence belongs to the sodium:solute symporter (SSF) (TC 2.A.21) family. In terms of assembly, interacts (via PDZ-binding motif) with PDZK1 (via PDZ domains 1 and 3); interaction increases nicotinate transport activity of SLC5A8. Expressed in brain, colon, kidney and in the ileum and jejunum of small intestine. In the kidney, expression occurred in the proximal tubule and the loop of Henle, being restricted to tubular epithelial cells in both the cortex and the medulla. In the colon, predominantly expressed in the distal half of the large bowel and in the most terminal ileum. Localized selectively in the luminal surface of crypts in the large intestine and to the brush border in the middle parts of crypts in the cecum. In the brain, expression was seen throughout, exclusively in neurons, including the cortex, hippocampus, cerebellum and pituitary gland (at protein level). Expression is reduced in oligodendrogliomas.

Its subcellular location is the apical cell membrane. The enzyme catalyses (S)-lactate(out) + 2 Na(+)(out) = (S)-lactate(in) + 2 Na(+)(in). It catalyses the reaction propanoate(out) + 2 Na(+)(out) = propanoate(in) + 2 Na(+)(in). It carries out the reaction pyruvate(out) + 2 Na(+)(out) = pyruvate(in) + 2 Na(+)(in). The catalysed reaction is acetate(out) + 2 Na(+)(out) = acetate(in) + 2 Na(+)(in). The enzyme catalyses butanoate(out) + 2 Na(+)(out) = butanoate(in) + 2 Na(+)(in). It catalyses the reaction nicotinate(out) + 2 Na(+)(out) = nicotinate(in) + 2 Na(+)(in). It carries out the reaction (R)-3-hydroxybutanoate(out) + 2 Na(+)(out) = (R)-3-hydroxybutanoate(in) + 2 Na(+)(in). The catalysed reaction is acetoacetate(out) + 2 Na(+)(out) = acetoacetate(in) + 2 Na(+)(in). The enzyme catalyses 4-methyl-2-oxopentanoate(out) + 2 Na(+)(out) = 4-methyl-2-oxopentanoate(in) + 2 Na(+)(in). It catalyses the reaction 5-oxo-L-proline(out) + 2 Na(+)(out) = 5-oxo-L-proline(in) + 2 Na(+)(in). It carries out the reaction iodide(out) = iodide(in). The catalysed reaction is chloride(in) = chloride(out). The enzyme catalyses nitrate(in) = nitrate(out). It catalyses the reaction bromide(in) = bromide(out). With respect to regulation, transport of D-lactate and pyruvate stimulated by alpha-cyano-4-hydroxycinnamic acid, but inhibited by the short-chain fatty acids acetate, propionate and butyrate. In terms of biological role, acts as an electrogenic sodium (Na(+)) and chloride (Cl-)-dependent sodium-coupled solute transporter, including transport of monocarboxylates (short-chain fatty acids including L-lactate, D-lactate, pyruvate, acetate, propionate, valerate and butyrate), mocarboxylate drugs (nicotinate, benzoate, salicylate and 5-aminosalicylate) and ketone bodies (beta-D-hydroxybutyrate, acetoacetate and alpha-ketoisocaproate), with a Na(+):substrate stoichiometry of between 4:1 and 2:1. Catalyzes passive carrier mediated diffusion of iodide. Mediates iodide transport from the thyrocyte into the colloid lumen through the apical membrane. May be responsible for the absorption of D-lactate and monocarboxylate drugs from the intestinal tract. May play a critical role in the entry of L-lactate and ketone bodies into neurons by a process driven by an electrochemical Na(+) gradient and hence contribute to the maintenance of the energy status and function of neurons. Mediates sodium-coupled electrogenic transport of pyroglutamate (5-oxo-L-proline). Can mediate the transport of chloride, bromide, iodide and nitrate ions when external concentration of sodium ions is reduced. This chain is Sodium-coupled monocarboxylate transporter 1, found in Mus musculus (Mouse).